We begin with the raw amino-acid sequence, 412 residues long: Peptidase T (412 aa).

Position 84 (His-84) interacts with Zn(2+). Asp-86 is a catalytic residue. Asp-146 contributes to the Zn(2+) binding site. Glu-179 serves as the catalytic Proton acceptor. Zn(2+) contacts are provided by Glu-180, Asp-202, and His-385.

This sequence belongs to the peptidase M20B family. The cofactor is Zn(2+).

It is found in the cytoplasm. The catalysed reaction is Release of the N-terminal residue from a tripeptide.. Cleaves the N-terminal amino acid of tripeptides. The chain is Peptidase T from Haemophilus influenzae (strain 86-028NP).